Consider the following 170-residue polypeptide: uncharacterized protein (170 aa).

This is an uncharacterized protein from Bacillus subtilis (strain 168).